The sequence spans 274 residues: Diaminopimelate epimerase (274 aa).

Substrate contacts are provided by asparagine 11, glutamine 44, and asparagine 64. Residue cysteine 73 is the Proton donor of the active site. Substrate contacts are provided by residues 74–75 (GN), asparagine 157, asparagine 190, and 208–209 (ER). The active-site Proton acceptor is cysteine 217. 218-219 (GS) contacts substrate.

The protein belongs to the diaminopimelate epimerase family. Homodimer.

It is found in the cytoplasm. The enzyme catalyses (2S,6S)-2,6-diaminopimelate = meso-2,6-diaminopimelate. It participates in amino-acid biosynthesis; L-lysine biosynthesis via DAP pathway; DL-2,6-diaminopimelate from LL-2,6-diaminopimelate: step 1/1. In terms of biological role, catalyzes the stereoinversion of LL-2,6-diaminopimelate (L,L-DAP) to meso-diaminopimelate (meso-DAP), a precursor of L-lysine and an essential component of the bacterial peptidoglycan. This chain is Diaminopimelate epimerase, found in Actinobacillus pleuropneumoniae serotype 7 (strain AP76).